The sequence spans 334 residues: DGAT1/2-independent enzyme synthesizing storage lipids (334 aa).

The Lumenal portion of the chain corresponds to 1-50; it reads MTNKNQSFGVGQDSMSSMTCLIHVLEAWFGVEHLEDYWNFANYLLWVFTP. A glycan (N-linked (GlcNAc...) asparagine) is linked at asparagine 5. The helical transmembrane segment at 51-71 threads the bilayer; that stretch reads LLLLILPYFTIFLLYLTIIFL. The Cytoplasmic portion of the chain corresponds to 72–125; sequence HIYKRKNVLKEAYSHNLWDGARKTVATLWDGHAAVWHGYEVHGMEKIPEEGPAL. The helical transmembrane segment at 126-146 threads the bilayer; the sequence is IIFYHGAIPIDFYYFMAKIFI. Residue histidine 130 is part of the active site. Over 147–334 the chain is Lumenal; sequence HKGRTCRVVA…NKQKINQKTL (188 aa).

It belongs to the diacylglycerol acyltransferase family. Highly divergent.

Its subcellular location is the endoplasmic reticulum membrane. The catalysed reaction is a 1,2-diacylglycerol + a 1,2-diacyl-sn-glycero-3-phosphocholine = a triacylglycerol + a 1-acyl-sn-glycero-3-phosphocholine. It carries out the reaction a 1-O-alkyl-2-acyl-sn-glycero-3-phosphocholine + a 1,2-diacylglycerol = a 1-O-alkyl-sn-glycero-3-phosphocholine + a triacylglycerol. It catalyses the reaction a 2-acylglycerol + an acyl-CoA = a 1,2-diacylglycerol + CoA. The enzyme catalyses an acyl-CoA + a 1,2-diacyl-sn-glycerol = a triacyl-sn-glycerol + CoA. The catalysed reaction is 2-(9Z-octadecenoyl)-glycerol + (9Z)-octadecenoyl-CoA = 1,2-di-(9Z-octadecenoyl)-glycerol + CoA. It carries out the reaction 1,2-di-(9Z-octadecenoyl)-sn-glycerol + (9Z)-octadecenoyl-CoA = 1,2,3-tri-(9Z-octadecenoyl)-glycerol + CoA. Its activity is regulated as follows. Acyltransferase activity is specifically inhibited by TMX1 at the endoplasmic reticulum, restricting accumulation of triacylglycerol. Its function is as follows. Catalytic subunit of the alternative triglyceride biosynthesis pathway, which mediates formation of triacylglycerol from diacylglycerol and membrane phospholipids. Synthesizes triacylglycerol at the expense of membrane phospholipids, such as phosphatidylcholine (PC) and its ether-linked form (ePC), thereby altering the composition of membranes. The alternative triglyceride biosynthesis pathway is probably required to provide the energy required for rapid growth when fuel sources are limiting. It maintains mitochondrial function during periods of extracellular lipid starvation. Can also use acyl-CoA as donor: acts as a acyl-CoA:monoacylglycerol acyltransferase (MGAT), but also shows acyl-CoA:diacylglycerol acyltransferase (DGAT) activity. This Bos taurus (Bovine) protein is DGAT1/2-independent enzyme synthesizing storage lipids (TMEM68).